The sequence spans 345 residues: Protein D345L (345 aa).

Belongs to the asfivirus D345L family. Interacts with IKKA/CHUK and IKBKB.

It localises to the host cytoplasm. In terms of biological role, plays a role in the negative regulation of host NF-kappa-B signaling pathway. Mechanistically, recruits host IKKA/CHUK and IKBKB to suppress their kinase activity towards NFKBIA. This chain is Protein D345L, found in African swine fever virus (strain Badajoz 1971 Vero-adapted) (Ba71V).